The chain runs to 260 residues: Ditrans,polycis-undecaprenyl-diphosphate synthase ((2E,6E)-farnesyl-diphosphate specific) (260 aa).

Aspartate 20 is an active-site residue. Aspartate 20 is a binding site for Mg(2+). Substrate contacts are provided by residues 21–24 (GNGR), tryptophan 25, arginine 33, histidine 37, and 65–67 (SSE). Asparagine 68 acts as the Proton acceptor in catalysis. 3 residues coordinate substrate: tryptophan 69, arginine 71, and arginine 188. Position 193 (histidine 193) interacts with Mg(2+). 194-196 (RIS) lines the substrate pocket. Mg(2+) is bound at residue glutamate 207.

This sequence belongs to the UPP synthase family. Homodimer. Requires Mg(2+) as cofactor.

The enzyme catalyses 8 isopentenyl diphosphate + (2E,6E)-farnesyl diphosphate = di-trans,octa-cis-undecaprenyl diphosphate + 8 diphosphate. Its function is as follows. Catalyzes the sequential condensation of isopentenyl diphosphate (IPP) with (2E,6E)-farnesyl diphosphate (E,E-FPP) to yield (2Z,6Z,10Z,14Z,18Z,22Z,26Z,30Z,34E,38E)-undecaprenyl diphosphate (di-trans,octa-cis-UPP). UPP is the precursor of glycosyl carrier lipid in the biosynthesis of bacterial cell wall polysaccharide components such as peptidoglycan and lipopolysaccharide. In Wigglesworthia glossinidia brevipalpis, this protein is Ditrans,polycis-undecaprenyl-diphosphate synthase ((2E,6E)-farnesyl-diphosphate specific).